The chain runs to 95 residues: UPF0358 protein BT9727_3692 (95 aa).

This sequence belongs to the UPF0358 family.

In Bacillus thuringiensis subsp. konkukian (strain 97-27), this protein is UPF0358 protein BT9727_3692.